Here is a 213-residue protein sequence, read N- to C-terminus: Octanoyltransferase (213 aa).

Positions 35 to 213 constitute a BPL/LPL catalytic domain; the sequence is DERGDAVLLL…ERHLPTLIEP (179 aa). Residues 73–80, 145–147, and 158–160 each bind substrate; these read RGGKITWH, AIG, and GFS. C176 acts as the Acyl-thioester intermediate in catalysis.

The protein belongs to the LipB family.

The protein resides in the cytoplasm. It catalyses the reaction octanoyl-[ACP] + L-lysyl-[protein] = N(6)-octanoyl-L-lysyl-[protein] + holo-[ACP] + H(+). It functions in the pathway protein modification; protein lipoylation via endogenous pathway; protein N(6)-(lipoyl)lysine from octanoyl-[acyl-carrier-protein]: step 1/2. In terms of biological role, catalyzes the transfer of endogenously produced octanoic acid from octanoyl-acyl-carrier-protein onto the lipoyl domains of lipoate-dependent enzymes. Lipoyl-ACP can also act as a substrate although octanoyl-ACP is likely to be the physiological substrate. This Salinispora tropica (strain ATCC BAA-916 / DSM 44818 / JCM 13857 / NBRC 105044 / CNB-440) protein is Octanoyltransferase.